Reading from the N-terminus, the 425-residue chain is Enolase (425 aa).

Gln162 lines the (2R)-2-phosphoglycerate pocket. Glu204 functions as the Proton donor in the catalytic mechanism. Residues Asp241, Glu288, and Asp315 each coordinate Mg(2+). (2R)-2-phosphoglycerate contacts are provided by Lys340, Arg369, Ser370, and Lys391. Lys340 (proton acceptor) is an active-site residue.

It belongs to the enolase family. The cofactor is Mg(2+).

The protein resides in the cytoplasm. It is found in the secreted. It localises to the cell surface. The catalysed reaction is (2R)-2-phosphoglycerate = phosphoenolpyruvate + H2O. Its pathway is carbohydrate degradation; glycolysis; pyruvate from D-glyceraldehyde 3-phosphate: step 4/5. Its function is as follows. Catalyzes the reversible conversion of 2-phosphoglycerate (2-PG) into phosphoenolpyruvate (PEP). It is essential for the degradation of carbohydrates via glycolysis. This chain is Enolase, found in Porphyromonas gingivalis (strain ATCC 33277 / DSM 20709 / CIP 103683 / JCM 12257 / NCTC 11834 / 2561).